The chain runs to 371 residues: Serpentine receptor class delta-1 (371 aa).

A run of 7 helical transmembrane segments spans residues 31–51 (LSEV…YVIF), 62–82 (AVLL…SLLA), 109–129 (CFFC…ILLI), 148–168 (MIVI…FYFW), 209–229 (IPSL…YFII), 267–287 (AIPI…FGII), and 295–315 (ITFR…FIFI). The tract at residues 344–371 (EKFNQPPKQPTNPAQQSANNDAAKTEKV) is disordered. Positions 354–365 (TNPAQQSANNDA) are enriched in polar residues.

Belongs to the nematode receptor-like protein srd family.

Its subcellular location is the membrane. The protein is Serpentine receptor class delta-1 (srd-1) of Caenorhabditis elegans.